The primary structure comprises 104 residues: Fluoride-specific ion channel FluC 2 (104 aa).

The next 3 helical transmembrane spans lie at 22–42 (IGPY…LAAV), 48–68 (LVMA…STLA), and 82–102 (MLLG…WCGL). The Na(+) site is built by glycine 59 and serine 62.

The protein belongs to the fluoride channel Fluc/FEX (TC 1.A.43) family.

The protein resides in the cell membrane. The enzyme catalyses fluoride(in) = fluoride(out). Na(+) is not transported, but it plays an essential structural role and its presence is essential for fluoride channel function. In terms of biological role, fluoride-specific ion channel. Important for reducing fluoride concentration in the cell, thus reducing its toxicity. The sequence is that of Fluoride-specific ion channel FluC 2 from Corynebacterium diphtheriae (strain ATCC 700971 / NCTC 13129 / Biotype gravis).